Consider the following 133-residue polypeptide: Putative biopolymer transport protein ExbD-like 1 (133 aa).

The Cytoplasmic segment spans residues 1 to 15 (MNYDNYWDEDKPELN). The chain crosses the membrane as a helical span at residues 16 to 32 (ITPLVDVMLVLLAILMV). At 33–133 (TTPTLTYKEE…FLKVSLITSP (101 aa)) the chain is on the periplasmic side.

It belongs to the ExbD/TolR family.

It localises to the cell inner membrane. This Helicobacter pylori (strain J99 / ATCC 700824) (Campylobacter pylori J99) protein is Putative biopolymer transport protein ExbD-like 1.